Consider the following 376-residue polypeptide: Deoxyhypusine synthase (376 aa).

NAD(+)-binding positions include 112–116 (SNLVS), 138–140 (TAG), E144, and D245. 143-144 (EE) contacts spermidine. Residue D250 participates in spermidine binding. An NAD(+)-binding site is contributed by G292. Residue H297 participates in spermidine binding. 317–318 (TA) provides a ligand contact to NAD(+). Residues 323–325 (GSD) and 332–338 (EAISWGK) contribute to the spermidine site. The Nucleophile role is filled by K338. 351–352 (DA) serves as a coordination point for NAD(+).

It belongs to the deoxyhypusine synthase family. NAD(+) is required as a cofactor.

It carries out the reaction [eIF5A protein]-L-lysine + spermidine = [eIF5A protein]-deoxyhypusine + propane-1,3-diamine. It participates in protein modification; eIF5A hypusination. In terms of biological role, catalyzes the NAD-dependent oxidative cleavage of spermidine and the subsequent transfer of the butylamine moiety of spermidine to the epsilon-amino group of a specific lysine residue of the eIF-5A precursor protein to form the intermediate deoxyhypusine residue. Also able to produce homospermidine from putrescine. The sequence is that of Deoxyhypusine synthase (DHS) from Musa acuminata (Banana).